Reading from the N-terminus, the 317-residue chain is MYTKIIGTGSYLPEQVRTNADLEKMVDTSDEWIVTRTGIRERHIAAQNETVSTMGFEAATRAIEMAGIEKDQIGLIVVATTSATHAFPSAACQIQSMLGIKGCPAFDVAAACAGFTYALSVADQYVKSGAVKYALVVGSDVLARTCDPTDRGTIIIFGDGAGAAVLAASEEPGIISTHLHADGSYGELLTLPNADRVNPENSIHLTMAGNEVFKVAVTELAHIVDETLAANNLDRSQLDWLVPHQANLRIISATAKKLGMSMDNVVVTLDRHGNTSAASVPCALDEAVRDGRIKPGQLVLLEAFGGGFTWGSALVRF.

Residues Cys-112 and His-244 contribute to the active site. The tract at residues 245–249 is ACP-binding; sequence QANLR. Asn-274 is an active-site residue.

It belongs to the thiolase-like superfamily. FabH family. As to quaternary structure, homodimer.

The protein resides in the cytoplasm. The enzyme catalyses malonyl-[ACP] + acetyl-CoA + H(+) = 3-oxobutanoyl-[ACP] + CO2 + CoA. It functions in the pathway lipid metabolism; fatty acid biosynthesis. In terms of biological role, catalyzes the condensation reaction of fatty acid synthesis by the addition to an acyl acceptor of two carbons from malonyl-ACP. Catalyzes the first condensation reaction which initiates fatty acid synthesis and may therefore play a role in governing the total rate of fatty acid production. Possesses both acetoacetyl-ACP synthase and acetyl transacylase activities. Its substrate specificity determines the biosynthesis of branched-chain and/or straight-chain of fatty acids. This is Beta-ketoacyl-[acyl-carrier-protein] synthase III from Escherichia coli O9:H4 (strain HS).